The following is a 285-amino-acid chain: Acetyl-coenzyme A carboxylase carboxyl transferase subunit beta (285 aa).

In terms of domain architecture, CoA carboxyltransferase N-terminal spans 22–285 (LWTKCEACGA…HPGVAYAPGV (264 aa)). Zn(2+)-binding residues include C26, C29, C45, and C48. Residues 26–48 (CEACGAQIYKKEFQENLHVCPKC) form a C4-type zinc finger.

Belongs to the AccD/PCCB family. As to quaternary structure, acetyl-CoA carboxylase is a heterohexamer composed of biotin carboxyl carrier protein (AccB), biotin carboxylase (AccC) and two subunits each of ACCase subunit alpha (AccA) and ACCase subunit beta (AccD). Zn(2+) serves as cofactor.

Its subcellular location is the cytoplasm. The enzyme catalyses N(6)-carboxybiotinyl-L-lysyl-[protein] + acetyl-CoA = N(6)-biotinyl-L-lysyl-[protein] + malonyl-CoA. The protein operates within lipid metabolism; malonyl-CoA biosynthesis; malonyl-CoA from acetyl-CoA: step 1/1. Its function is as follows. Component of the acetyl coenzyme A carboxylase (ACC) complex. Biotin carboxylase (BC) catalyzes the carboxylation of biotin on its carrier protein (BCCP) and then the CO(2) group is transferred by the transcarboxylase to acetyl-CoA to form malonyl-CoA. This Thermus thermophilus (strain ATCC 27634 / DSM 579 / HB8) protein is Acetyl-coenzyme A carboxylase carboxyl transferase subunit beta.